A 553-amino-acid chain; its full sequence is Peroxiredoxin-2A (553 aa).

The Thioredoxin domain occupies 4 to 160 (IDVGDFVPDG…LMKMTTTTMS (157 aa)). The Cysteine sulfenic acid (-SOH) intermediate role is filled by C51. One can recognise an F-box domain in the interval 156–201 (TTTMSNLPTDLLEEIISRVPRKYMRAVRLTCKRWNGMFKSQSFTKM).

The protein belongs to the peroxiredoxin family. Prx5 subfamily. In terms of assembly, monomer.

It catalyses the reaction [glutaredoxin]-dithiol + a hydroperoxide = [glutaredoxin]-disulfide + an alcohol + H2O. Its function is as follows. Thiol-specific peroxidase that catalyzes the reduction of hydrogen peroxide and organic hydroperoxides to water and alcohols, respectively. Plays a role in cell protection against oxidative stress by detoxifying peroxides. May be involved in intracellular redox signaling. The chain is Peroxiredoxin-2A (PRXIIA) from Arabidopsis thaliana (Mouse-ear cress).